The following is a 298-amino-acid chain: Probable aspartoacylase (298 aa).

Zn(2+) contacts are provided by His13 and Glu16. Substrate-binding positions include Arg54 and 61 to 62 (NR). His103 provides a ligand contact to Zn(2+). Positions 161 and 271 each coordinate substrate.

It belongs to the AspA/AstE family. Aspartoacylase subfamily. Zn(2+) is required as a cofactor.

The catalysed reaction is an N-acyl-L-aspartate + H2O = a carboxylate + L-aspartate. The sequence is that of Probable aspartoacylase from Prochlorococcus marinus (strain MIT 9515).